The following is a 485-amino-acid chain: Glutamyl-tRNA(Gln) amidotransferase subunit A (485 aa).

Active-site charge relay system residues include lysine 79 and serine 154. Catalysis depends on serine 178, which acts as the Acyl-ester intermediate.

Belongs to the amidase family. GatA subfamily. As to quaternary structure, heterotrimer of A, B and C subunits.

The catalysed reaction is L-glutamyl-tRNA(Gln) + L-glutamine + ATP + H2O = L-glutaminyl-tRNA(Gln) + L-glutamate + ADP + phosphate + H(+). Allows the formation of correctly charged Gln-tRNA(Gln) through the transamidation of misacylated Glu-tRNA(Gln) in organisms which lack glutaminyl-tRNA synthetase. The reaction takes place in the presence of glutamine and ATP through an activated gamma-phospho-Glu-tRNA(Gln). In Sulfurihydrogenibium sp. (strain YO3AOP1), this protein is Glutamyl-tRNA(Gln) amidotransferase subunit A.